Consider the following 735-residue polypeptide: Probable ATP-dependent RNA helicase DHR2 (735 aa).

Polar residues predominate over residues 1–13 (MAANSNSRVASNH). Positions 1-29 (MAANSNSRVASNHTSKKQKVRRNIHPFTN) are disordered. Over residues 14–24 (TSKKQKVRRNI) the composition is skewed to basic residues. The Helicase ATP-binding domain maps to 91–257 (MSYIESNPVT…FNNAPILFVE (167 aa)). 104–111 (GETGSGKS) serves as a coordination point for ATP. The DEAH box signature appears at 203 to 206 (DEAH). A Helicase C-terminal domain is found at 262 to 456 (DVKQYYLKAP…SPVLMLKRYG (195 aa)).

The protein belongs to the DEAD box helicase family. DEAH subfamily. In terms of assembly, interacts with NOP19. Interacts with UBP10.

It localises to the nucleus. The protein localises to the nucleolus. It carries out the reaction ATP + H2O = ADP + phosphate + H(+). Functionally, probable ATP-binding RNA helicase. Required for 18S rRNA synthesis. The chain is Probable ATP-dependent RNA helicase DHR2 (DHR2) from Saccharomyces cerevisiae (strain ATCC 204508 / S288c) (Baker's yeast).